The primary structure comprises 1008 residues: ATP-dependent DNA/RNA helicase DHX36 (1008 aa).

A required for recruitment to cytoplasmic stress granules region spans residues 1 to 51; the sequence is MSYDYHQNWGRDGGPRSSGGGYGGGPAGGHGGNRGSGGGGGGGGGGRGGRG. Positions 1–58 are disordered; it reads MSYDYHQNWGRDGGPRSSGGGYGGGPAGGHGGNRGSGGGGGGGGGGRGGRGRHPGHLK. The segment at 1–104 is required for the pre-miR-134 transport; that stretch reads MSYDYHQNWG…IVQLLNSVQA (104 aa). The tract at residues 1–200 is necessary for nuclear and nucleolar caps localizations; the sequence is MSYDYHQNWG…KKNDLRYIEM (200 aa). Residues 16 to 48 show a composition bias toward gly residues; sequence RSSGGGYGGGPAGGHGGNRGSGGGGGGGGGGRG. Residues 53–75 form a DSM (DHX36-specific motif) region; the sequence is HPGHLKGREIGMWYAKKQGQKNK. The interval 53-105 is required for G4-DNA- and G4-RNA-binding; the sequence is HPGHLKGREIGMWYAKKQGQKNKEAERQERAVVHMDERREEQIVQLLNSVQAK. The stretch at 72 to 157 forms a coiled coil; it reads QKNKEAERQE…INQEKKMFRI (86 aa). 2 recA-like domain regions span residues 106 to 386 and 387 to 628; these read NDKE…MIHI and PGFT…DYQL. S161 carries the post-translational modification Phosphoserine. The Helicase ATP-binding domain occupies 217 to 387; sequence VNLIDNHQVT…FGNCPMIHIP (171 aa). Residue 233–238 coordinates ATP; sequence GCGKTT. Residues 265–317 are necessary for interaction with single-stranded DNA at the 3'-end of the G4-DNA structure; sequence RRISAISVAERVAAERAESCGSGNSTGYQIRLQSRLPRKQGSILYCTTGIILQ. The short motif at 334 to 337 is the DEAH box element; sequence DEIH. Mg(2+)-binding residues include E335 and H337. The region spanning 477-647 is the Helicase C-terminal domain; it reads ALIRYIVLEE…ELCLQIKILR (171 aa). The segment at 498–557 is necessary for interaction with single-stranded DNA at the 3'-end of the G4-DNA structure; the sequence is WDNISTLHDLLMSQVMFKSDKFLIIPLHSLMPTVNQTQVFKRTPPGVRKIVIATNIAETS. Positions 517–528 match the Nuclear localization signal motif; the sequence is DKFLIIPLHSLM. ATP contacts are provided by residues S557 and 602 to 605; that span reads RAGR. The WH domain stretch occupies residues 629-698; it reads PEILRTPLEE…LGVHLARLPV (70 aa). Necessary for interaction with single-stranded DNA at the 3'-end of the G4-DNA structure regions lie at residues 638–697, 849–860, and 870–900; these read ELCL…ARLP, NLGKKRKMVKVY, and HPKS…IYLY. An OB-fold-like subdomains region spans residues 841 to 905; that stretch reads PKVAKIRLNL…SIYLYDCTEV (65 aa). N6-acetyllysine is present on K947. S963 carries the phosphoserine modification.

This sequence belongs to the DEAD box helicase family. DEAH subfamily. Found in a multi-helicase-TICAM1 complex at least composed of DHX36, DDX1, DDX21 and TICAM1; this complex exists in resting cells with or without dsRNA poly(I:C) ligand stimulation. Interacts (via C-terminus) with TICAM1 (via TIR domain). Interacts (via C-terminus) with DDX21; this interaction serves as bridges to TICAM1. Interacts with TERT; this interaction is dependent on the ability of DHX36 to bind to the G-quadruplex RNA (G4-RNA) structure present in the telomerase RNA template component (TERC). Interacts with DKC1; this interaction is dependent on the ability of DHX36 to bind to the G4-RNA structure present in TERC. Interacts with PARN; this interaction stimulates PARN to enhance uPA mRNA decay. Interacts with EXOSC3; this interaction occurs in a RNase-insensitive manner. Interacts with EXOSC10; this interaction occurs in a RNase-insensitive manner. Interacts with ILF3; this interaction occurs in a RNA-dependent manner. Interacts with ELAVL1; this interaction occurs in an RNA-dependent manner. Interacts with DDX5; this interaction occurs in a RNA-dependent manner. Interacts with DDX17; this interaction occurs in a RNA-dependent manner. Interacts with HDAC1; this interaction occurs in a RNA-dependent manner. Interacts with HDAC3; this interaction occurs in a RNA-dependent manner. Interacts with HDAC4. Interacts with AGO1. Interacts with AGO2. Interacts with ERCC6. The cofactor is Mg(2+). As to expression, highly expressed in testis.

The protein resides in the nucleus. It is found in the cytoplasm. It localises to the cytosol. Its subcellular location is the stress granule. The protein localises to the nucleus speckle. The protein resides in the chromosome. It is found in the telomere. It localises to the mitochondrion. Its subcellular location is the perikaryon. The protein localises to the cell projection. The protein resides in the dendrite. It is found in the axon. It carries out the reaction ATP + H2O = ADP + phosphate + H(+). ATPase activity is enhanced in the presence of homomeric poly(U) RNAs, but not by double-stranded DNA (dsDNA), double-stranded RNA (dsRNA) and tRNA. In terms of biological role, multifunctional ATP-dependent helicase that unwinds G-quadruplex (G4) structures. Plays a role in many biological processes such as genomic integrity, gene expression regulations and as a sensor to initiate antiviral responses. G4 structures correspond to helical structures containing guanine tetrads. Binds with high affinity to and unwinds G4 structures that are formed in nucleic acids (G4-DNA and G4-RNA). Plays a role in genomic integrity. Converts the G4-RNA structure present in telomerase RNA template component (TREC) into a double-stranded RNA to promote P1 helix formation that acts as a template boundary ensuring accurate reverse transcription. Plays a role in transcriptional regulation. Resolves G4-DNA structures in promoters of genes, such as YY1, KIT/c-kit and ALPL and positively regulates their expression. Plays a role in post-transcriptional regulation. Unwinds a G4-RNA structure located in the 3'-UTR polyadenylation site of the pre-mRNA TP53 and stimulates TP53 pre-mRNA 3'-end processing in response to ultraviolet (UV)-induced DNA damage. Binds to the precursor-microRNA-134 (pre-miR-134) terminal loop and regulates its transport into the synapto-dendritic compartment. Involved in the pre-miR-134-dependent inhibition of target gene expression and the control of dendritic spine size. Plays a role in the regulation of cytoplasmic mRNA translation and mRNA stability. Binds to both G4-RNA structures and alternative non-quadruplex-forming sequence within the 3'-UTR of the PITX1 mRNA regulating negatively PITX1 protein expression. Binds to both G4-RNA structure in the 5'-UTR and AU-rich elements (AREs) localized in the 3'-UTR of NKX2-5 mRNA to either stimulate protein translation or induce mRNA decay in an ELAVL1-dependent manner, respectively. Also binds to ARE sequences present in several mRNAs mediating exosome-mediated 3'-5' mRNA degradation. Involved in cytoplasmic urokinase-type plasminogen activator (uPA) mRNA decay. Component of a multi-helicase-TICAM1 complex that acts as a cytoplasmic sensor of viral double-stranded RNA (dsRNA) and plays a role in the activation of a cascade of antiviral responses including the induction of pro-inflammatory cytokines via the adapter molecule TICAM1. Required for early embryonic development and hematopoiesis. Involved in the regulation of cardioblast differentiation and proliferation during heart development. Involved in spermatogonia differentiation. May play a role in ossification. This chain is ATP-dependent DNA/RNA helicase DHX36, found in Homo sapiens (Human).